Here is a 374-residue protein sequence, read N- to C-terminus: MPIIAVISKNNCQFDDLENYVLPLLYQYHDETTRLQLKNKLNDYLWEIIEPYVTFINCQSDIFMETICTHLVKEFPDKKLDDFFYHTESSFSFPKKHTELMYCQPTWSYQKDQEVNMNFIGCLFSLKHNVIENTCIVIANNYDISTQNNIVIGDVTKNDILRMVRRRYFFSAELIKNDTITKYYYQNPGYLVSKVFDLKEQDTIEKLTVGFLKYNLSFYCNQNKNQYVNKIATRINGLYQLYGDVLVLNEMDEHVYTNLSTHELRRLNVLAYGRLYDRQLKADEIHEESHVEVDEQGKEIEKKKTPLWSKYIIIDKRMSEWQNNKNKCFYCNKNIEKPVVCNKCFRIKYCSEKCQSEYNSYHSDDCINPKSITN.

The Zn(2+) site is built by Cys-328, Cys-331, Cys-341, Cys-344, Cys-350, Cys-354, His-362, and Cys-366. An MYND-type zinc finger spans residues 328 to 366 (CFYCNKNIEKPVVCNKCFRIKYCSEKCQSEYNSYHSDDC).

This is Putative zinc finger MYND domain-containing protein R331 from Acanthamoeba polyphaga (Amoeba).